A 399-amino-acid polypeptide reads, in one-letter code: Zinc metalloproteinase nas-25 (399 aa).

Positions 1-20 (MQIYLGITICLVAFLTVIDC) are cleaved as a signal peptide. The 197-residue stretch at 41 to 237 (QVQRDLTYRW…DQINQYYQCY (197 aa)) folds into the Peptidase M12A domain. N-linked (GlcNAc...) asparagine glycans are attached at residues asparagine 52 and asparagine 61. 4 cysteine pairs are disulfide-bonded: cysteine 82-cysteine 236, cysteine 106-cysteine 126, cysteine 240-cysteine 260, and cysteine 265-cysteine 274. Histidine 134 is a binding site for Zn(2+). Glutamate 135 is an active-site residue. Residues histidine 138 and histidine 144 each coordinate Zn(2+). Positions 232–275 (QYYQCYDSCRNAGQLANCANGGIPNPNNCQVCNCPMGYGGDLCD) constitute an EGF-like domain. N-linked (GlcNAc...) asparagine glycosylation occurs at asparagine 371.

Zn(2+) serves as cofactor. Expressed in pharyngeal muscles, pharyngeal-intestinal valve, rectal gland cells and arcade cells.

It localises to the secreted. Its function is as follows. Metalloprotease. This chain is Zinc metalloproteinase nas-25 (nas-25), found in Caenorhabditis elegans.